A 120-amino-acid polypeptide reads, in one-letter code: Spermidine export protein MdtJ (120 aa).

Helical transmembrane passes span 1–21, 31–51, 54–74, and 81–101; these read MFYW…TLSM, AGFI…SFAV, IALG…ITIF, and EALS…IVLI.

This sequence belongs to the drug/metabolite transporter (DMT) superfamily. Small multidrug resistance (SMR) (TC 2.A.7.1) family. MdtJ subfamily. In terms of assembly, forms a complex with MdtI.

The protein localises to the cell inner membrane. Its function is as follows. Catalyzes the excretion of spermidine. The sequence is that of Spermidine export protein MdtJ from Salmonella paratyphi A (strain ATCC 9150 / SARB42).